Consider the following 162-residue polypeptide: Serine-protein kinase RsbW (162 aa).

Belongs to the anti-sigma-factor family.

The catalysed reaction is L-seryl-[protein] + ATP = O-phospho-L-seryl-[protein] + ADP + H(+). It catalyses the reaction L-threonyl-[protein] + ATP = O-phospho-L-threonyl-[protein] + ADP + H(+). Functionally, negative regulator of sigma-B activity. Phosphorylates and inactivates its specific antagonist protein, RsbV. Upon phosphorylation of RsbV, RsbW is released and binds to sigma-B, thereby blocking its ability to form an RNA polymerase holoenzyme (E-sigma-B). In Bacillus pumilus (strain SAFR-032), this protein is Serine-protein kinase RsbW.